A 659-amino-acid polypeptide reads, in one-letter code: UvrABC system protein B (659 aa).

The Helicase ATP-binding domain occupies 25–414 (EGVRRGAREQ…PSLVVEQIVR (390 aa)). ATP is bound at residue 38 to 45 (GATGTGKT). The short motif at 91-114 (YYDYYQPEAYIPTTDTYIEKDALI) is the Beta-hairpin element. Positions 431-597 (QIDDLYAEIR…TIVKPVRDVI (167 aa)) constitute a Helicase C-terminal domain. The 36-residue stretch at 620 to 655 (PKVVAKLRKEMMQAAKDLDFERAAEIRDIIFELEKK) folds into the UVR domain.

It belongs to the UvrB family. As to quaternary structure, forms a heterotetramer with UvrA during the search for lesions. Interacts with UvrC in an incision complex.

It localises to the cytoplasm. Its function is as follows. The UvrABC repair system catalyzes the recognition and processing of DNA lesions. A damage recognition complex composed of 2 UvrA and 2 UvrB subunits scans DNA for abnormalities. Upon binding of the UvrA(2)B(2) complex to a putative damaged site, the DNA wraps around one UvrB monomer. DNA wrap is dependent on ATP binding by UvrB and probably causes local melting of the DNA helix, facilitating insertion of UvrB beta-hairpin between the DNA strands. Then UvrB probes one DNA strand for the presence of a lesion. If a lesion is found the UvrA subunits dissociate and the UvrB-DNA preincision complex is formed. This complex is subsequently bound by UvrC and the second UvrB is released. If no lesion is found, the DNA wraps around the other UvrB subunit that will check the other stand for damage. This Symbiobacterium thermophilum (strain DSM 24528 / JCM 14929 / IAM 14863 / T) protein is UvrABC system protein B.